The chain runs to 549 residues: Copalyl diphosphate synthase (549 aa).

Positions 321–326 (DADDTA) match the DXDDTA motif motif. The short motif at 451–457 (QRDDGSW) is the QXXDGSW motif element.

This sequence belongs to the terpene synthase family. Requires Mg(2+) as cofactor.

It carries out the reaction (2E,6E,10E)-geranylgeranyl diphosphate = (+)-copalyl diphosphate. Its function is as follows. Involved in the biosynthesis of the labdane-type bicyclic diterpene labda-8(17),12(E),14-triene. Catalyzes the conversion of geranylgeranyl diphosphate (GGDP) into (+)-copalyl diphosphate. The polypeptide is Copalyl diphosphate synthase (Streptomyces anulatus (Streptomyces chrysomallus)).